Reading from the N-terminus, the 100-residue chain is Integration host factor subunit beta (100 aa).

The tract at residues 81–100 (KPGKELRDRVNEDEHEEAHT) is disordered. A compositionally biased stretch (basic and acidic residues) spans 82–100 (PGKELRDRVNEDEHEEAHT).

It belongs to the bacterial histone-like protein family. In terms of assembly, heterodimer of an alpha and a beta chain.

Functionally, this protein is one of the two subunits of integration host factor, a specific DNA-binding protein that functions in genetic recombination as well as in transcriptional and translational control. The sequence is that of Integration host factor subunit beta (ihfB) from Pseudomonas putida (Arthrobacter siderocapsulatus).